We begin with the raw amino-acid sequence, 252 residues long: Large ribosomal subunit protein uL4 (252 aa).

The protein belongs to the universal ribosomal protein uL4 family. Part of the 50S ribosomal subunit.

In terms of biological role, one of the primary rRNA binding proteins, this protein initially binds near the 5'-end of the 23S rRNA. It is important during the early stages of 50S assembly. It makes multiple contacts with different domains of the 23S rRNA in the assembled 50S subunit and ribosome. Functionally, forms part of the polypeptide exit tunnel. This chain is Large ribosomal subunit protein uL4, found in Methanococcus aeolicus (strain ATCC BAA-1280 / DSM 17508 / OCM 812 / Nankai-3).